The following is a 620-amino-acid chain: Dihydroxy-acid dehydratase (620 aa).

Asp82 is a Mg(2+) binding site. [2Fe-2S] cluster is bound at residue Cys123. Residues Asp124 and Lys125 each coordinate Mg(2+). At Lys125 the chain carries N6-carboxylysine. A [2Fe-2S] cluster-binding site is contributed by Cys197. Glu493 provides a ligand contact to Mg(2+). Catalysis depends on Ser519, which acts as the Proton acceptor.

It belongs to the IlvD/Edd family. In terms of assembly, homodimer. It depends on [2Fe-2S] cluster as a cofactor. Mg(2+) is required as a cofactor.

It catalyses the reaction (2R)-2,3-dihydroxy-3-methylbutanoate = 3-methyl-2-oxobutanoate + H2O. It carries out the reaction (2R,3R)-2,3-dihydroxy-3-methylpentanoate = (S)-3-methyl-2-oxopentanoate + H2O. It functions in the pathway amino-acid biosynthesis; L-isoleucine biosynthesis; L-isoleucine from 2-oxobutanoate: step 3/4. The protein operates within amino-acid biosynthesis; L-valine biosynthesis; L-valine from pyruvate: step 3/4. Functions in the biosynthesis of branched-chain amino acids. Catalyzes the dehydration of (2R,3R)-2,3-dihydroxy-3-methylpentanoate (2,3-dihydroxy-3-methylvalerate) into 2-oxo-3-methylpentanoate (2-oxo-3-methylvalerate) and of (2R)-2,3-dihydroxy-3-methylbutanoate (2,3-dihydroxyisovalerate) into 2-oxo-3-methylbutanoate (2-oxoisovalerate), the penultimate precursor to L-isoleucine and L-valine, respectively. This chain is Dihydroxy-acid dehydratase, found in Bifidobacterium longum (strain NCC 2705).